The chain runs to 193 residues: Potassium-transporting ATPase KdpC subunit (193 aa).

The chain crosses the membrane as a helical span at residues 7–27 (PALVLFAALTLLTGVAYPLAV).

It belongs to the KdpC family. As to quaternary structure, the system is composed of three essential subunits: KdpA, KdpB and KdpC.

The protein resides in the cell inner membrane. Functionally, part of the high-affinity ATP-driven potassium transport (or Kdp) system, which catalyzes the hydrolysis of ATP coupled with the electrogenic transport of potassium into the cytoplasm. This subunit acts as a catalytic chaperone that increases the ATP-binding affinity of the ATP-hydrolyzing subunit KdpB by the formation of a transient KdpB/KdpC/ATP ternary complex. The protein is Potassium-transporting ATPase KdpC subunit of Rhodospirillum rubrum (strain ATCC 11170 / ATH 1.1.1 / DSM 467 / LMG 4362 / NCIMB 8255 / S1).